Consider the following 419-residue polypeptide: UDP-N-acetylglucosamine 1-carboxyvinyltransferase 2 (419 aa).

Phosphoenolpyruvate is bound at residue 24–25; sequence KN. Arg-94 contacts UDP-N-acetyl-alpha-D-glucosamine. Cys-118 (proton donor) is an active-site residue. The residue at position 118 (Cys-118) is a 2-(S-cysteinyl)pyruvic acid O-phosphothioketal. UDP-N-acetyl-alpha-D-glucosamine contacts are provided by residues 123-127, Asp-307, and Ile-329; that span reads RPIDQ.

Belongs to the EPSP synthase family. MurA subfamily.

It localises to the cytoplasm. The enzyme catalyses phosphoenolpyruvate + UDP-N-acetyl-alpha-D-glucosamine = UDP-N-acetyl-3-O-(1-carboxyvinyl)-alpha-D-glucosamine + phosphate. Its pathway is cell wall biogenesis; peptidoglycan biosynthesis. Functionally, cell wall formation. Adds enolpyruvyl to UDP-N-acetylglucosamine. This Staphylococcus epidermidis (strain ATCC 12228 / FDA PCI 1200) protein is UDP-N-acetylglucosamine 1-carboxyvinyltransferase 2.